The following is a 120-amino-acid chain: Non-specific lipid-transfer protein (120 aa).

The signal sequence occupies residues 1-26; it reads MGVLRSSFVAMMVMYMVLATTPNAEA. Cystine bridges form between Cys30–Cys79, Cys40–Cys56, Cys57–Cys102, and Cys77–Cys116.

This sequence belongs to the plant LTP family. As to expression, expressed in protoderm cells of somatic and zygotic embryos, and transiently expressed in epidermal cell layers of leaves, flowers and seeds.

Plant non-specific lipid-transfer proteins transfer phospholipids as well as galactolipids across membranes. May play a role in wax or cutin deposition in the cell walls of expanding epidermal cells and certain secretory tissues. The sequence is that of Non-specific lipid-transfer protein (EP2) from Daucus carota (Wild carrot).